Consider the following 387-residue polypeptide: Protoheme IX farnesyltransferase, mitochondrial (387 aa).

Transmembrane regions (helical) follow at residues 95–115, 117–137, 183–203, 212–232, 242–262, 284–306, 311–330, and 345–365; these read LTVLVVLSTMSSYALAPYPGL, FNTLAWLTMGTALCSISANAF, FLVNPTVGWLGLGNIVLYMGI, IVNTWVGSLVGAIPPLMGWAA, PGGLITAAMLFAWQFPHFNAF, ALNARVSLRYALAFLPLSYAYIS, GPWYAVPATGTNMFLIARAW, and FFASLLHLPLLFTLTLACHMI.

It belongs to the UbiA prenyltransferase family.

The protein localises to the mitochondrion membrane. The enzyme catalyses heme b + (2E,6E)-farnesyl diphosphate + H2O = Fe(II)-heme o + diphosphate. In terms of biological role, converts protoheme IX and farnesyl diphosphate to heme O. This Schizosaccharomyces pombe (strain 972 / ATCC 24843) (Fission yeast) protein is Protoheme IX farnesyltransferase, mitochondrial (cox10).